The sequence spans 427 residues: Serine--tRNA ligase (427 aa).

Residue 235–237 (TSE) coordinates L-serine. 266–268 (RSE) provides a ligand contact to ATP. Glu289 is a binding site for L-serine. 353–356 (EISS) serves as a coordination point for ATP. Position 388 (Ser388) interacts with L-serine.

Belongs to the class-II aminoacyl-tRNA synthetase family. Type-1 seryl-tRNA synthetase subfamily. As to quaternary structure, homodimer. The tRNA molecule binds across the dimer.

It localises to the cytoplasm. It catalyses the reaction tRNA(Ser) + L-serine + ATP = L-seryl-tRNA(Ser) + AMP + diphosphate + H(+). The enzyme catalyses tRNA(Sec) + L-serine + ATP = L-seryl-tRNA(Sec) + AMP + diphosphate + H(+). It functions in the pathway aminoacyl-tRNA biosynthesis; selenocysteinyl-tRNA(Sec) biosynthesis; L-seryl-tRNA(Sec) from L-serine and tRNA(Sec): step 1/1. In terms of biological role, catalyzes the attachment of serine to tRNA(Ser). Is also able to aminoacylate tRNA(Sec) with serine, to form the misacylated tRNA L-seryl-tRNA(Sec), which will be further converted into selenocysteinyl-tRNA(Sec). The chain is Serine--tRNA ligase from Chromobacterium violaceum (strain ATCC 12472 / DSM 30191 / JCM 1249 / CCUG 213 / NBRC 12614 / NCIMB 9131 / NCTC 9757 / MK).